We begin with the raw amino-acid sequence, 240 residues long: UDP-2,3-diacylglucosamine hydrolase (240 aa).

Mn(2+) is bound by residues Asp8, His10, Asp41, Asn79, and His114. 79-80 (NR) provides a ligand contact to substrate. Positions 122, 160, 164, 167, and 195 each coordinate substrate. Residues His195 and His197 each contribute to the Mn(2+) site.

The protein belongs to the LpxH family. Requires Mn(2+) as cofactor.

Its subcellular location is the cell inner membrane. It carries out the reaction UDP-2-N,3-O-bis[(3R)-3-hydroxytetradecanoyl]-alpha-D-glucosamine + H2O = 2-N,3-O-bis[(3R)-3-hydroxytetradecanoyl]-alpha-D-glucosaminyl 1-phosphate + UMP + 2 H(+). It functions in the pathway glycolipid biosynthesis; lipid IV(A) biosynthesis; lipid IV(A) from (3R)-3-hydroxytetradecanoyl-[acyl-carrier-protein] and UDP-N-acetyl-alpha-D-glucosamine: step 4/6. In terms of biological role, hydrolyzes the pyrophosphate bond of UDP-2,3-diacylglucosamine to yield 2,3-diacylglucosamine 1-phosphate (lipid X) and UMP by catalyzing the attack of water at the alpha-P atom. Involved in the biosynthesis of lipid A, a phosphorylated glycolipid that anchors the lipopolysaccharide to the outer membrane of the cell. The polypeptide is UDP-2,3-diacylglucosamine hydrolase (Cellvibrio japonicus (strain Ueda107) (Pseudomonas fluorescens subsp. cellulosa)).